Consider the following 25-residue polypeptide: Ocellatin-F1 (25 aa).

Leucine 25 carries the leucine amide modification.

The protein belongs to the frog skin active peptide (FSAP) family. Ocellatin subfamily. Expressed by the skin glands.

The protein localises to the secreted. Antibacterial peptide that inhibits reference strains of both Gram-negative bacteria (E.coli, P.aeruginosa, E.cloacae, K.pneumoniae, and A.actinomycetemcomitans) and Gram-positive bacteria (S.aureus) with relatively low potencies (MIC=25-400 uM). Shows antifungal activity against C.lusitaniae (MIC=50.25 uM), but no activity against C.albicans. In the presence of an alkaloid (bufotenine), inhibits cellular infection by the rabies virus. The peptide shows very low hemolytic activity against rabbit erythrocytes. The low amphipathicity of alpha-helices demonstrated by wheel projection as well as the low cationicity may explain the low antibacterial and hemolytic potencies. This chain is Ocellatin-F1, found in Leptodactylus labyrinthicus (Labyrinth frog).